The chain runs to 175 residues: uncharacterized protein (175 aa).

The segment covering M1–D14 has biased composition (polar residues). 2 disordered regions span residues M1–S31 and A127–R175. Over residues H16–A27 the composition is skewed to basic and acidic residues. Low complexity predominate over residues R130–L149. Over residues G154–R175 the composition is skewed to polar residues.

The protein resides in the cytoplasm. It is found in the nucleus. This is an uncharacterized protein from Schizosaccharomyces pombe (strain 972 / ATCC 24843) (Fission yeast).